Consider the following 314-residue polypeptide: Ferredoxin:CoB-CoM heterodisulfide reductase subunit B (314 aa).

The protein belongs to the HdrB family. As to quaternary structure, the ferredoxin:CoB-CoM heterodisulfide reductase is composed of three subunits; HdrA1, HdrB1 and HdrC1. The cofactor is [4Fe-4S] cluster.

The protein localises to the cytoplasm. It catalyses the reaction coenzyme B + coenzyme M + 2 oxidized [2Fe-2S]-[ferredoxin] = coenzyme M-coenzyme B heterodisulfide + 2 reduced [2Fe-2S]-[ferredoxin] + 2 H(+). It participates in cofactor metabolism; coenzyme M-coenzyme B heterodisulfide reduction; coenzyme B and coenzyme M from coenzyme M-coenzyme B heterodisulfide: step 1/1. Its function is as follows. Part of a complex that catalyzes the reversible reduction of CoM-S-S-CoB to the thiol-coenzymes H-S-CoM (coenzyme M) and H-S-CoB (coenzyme B). Probably involved in methylotrophic methanogenesis but not in aceticlastic methanogenesis. The chain is Ferredoxin:CoB-CoM heterodisulfide reductase subunit B from Methanosarcina acetivorans (strain ATCC 35395 / DSM 2834 / JCM 12185 / C2A).